A 326-amino-acid polypeptide reads, in one-letter code: tRNA-dihydrouridine(16) synthase (326 aa).

FMN-binding positions include 8-10 (PME) and Gln-69. Catalysis depends on Cys-99, which acts as the Proton donor. FMN-binding positions include Lys-140, 200–202 (NGE), and 224–225 (GR).

This sequence belongs to the Dus family. DusC subfamily. The cofactor is FMN.

It carries out the reaction 5,6-dihydrouridine(16) in tRNA + NADP(+) = uridine(16) in tRNA + NADPH + H(+). The enzyme catalyses 5,6-dihydrouridine(16) in tRNA + NAD(+) = uridine(16) in tRNA + NADH + H(+). Catalyzes the synthesis of 5,6-dihydrouridine (D), a modified base found in the D-loop of most tRNAs, via the reduction of the C5-C6 double bond in target uridines. Specifically modifies U16 in tRNAs. In Ralstonia nicotianae (strain ATCC BAA-1114 / GMI1000) (Ralstonia solanacearum), this protein is tRNA-dihydrouridine(16) synthase.